The primary structure comprises 310 residues: GMP synthase [glutamine-hydrolyzing] subunit B (310 aa).

In terms of domain architecture, GMPS ATP-PPase spans 2–185; that stretch reads FDAKSFIEES…LGLPEKIAHR (184 aa). Position 29 to 35 (29 to 35) interacts with ATP; the sequence is SGGVDSS.

As to quaternary structure, heterodimer composed of a glutamine amidotransferase subunit (A) and a GMP-binding subunit (B).

The catalysed reaction is XMP + L-glutamine + ATP + H2O = GMP + L-glutamate + AMP + diphosphate + 2 H(+). The protein operates within purine metabolism; GMP biosynthesis; GMP from XMP (L-Gln route): step 1/1. Functionally, catalyzes the synthesis of GMP from XMP. The protein is GMP synthase [glutamine-hydrolyzing] subunit B of Methanococcus vannielii (strain ATCC 35089 / DSM 1224 / JCM 13029 / OCM 148 / SB).